The primary structure comprises 2190 residues: Voltage-dependent L-type calcium channel subunit alpha-1D (2190 aa).

Residues 1 to 10 (MQHHQQQQPE) show a composition bias toward low complexity. 2 disordered regions span residues 1 to 44 (MQHH…SKQT) and 57 to 96 (QAKAAQNMNTTTAQPVGSLSQRKRQQYAKSKKQGNTSNSR). Residues 1 to 121 (MQHHQQQQPE…RACISLVEWK (121 aa)) lie on the Cytoplasmic side of the membrane. 2 stretches are compositionally biased toward polar residues: residues 31 to 44 (PTTQSNSSAPSKQT) and 63 to 76 (NMNTTTAQPVGSLS). The span at 77 to 88 (QRKRQQYAKSKK) shows a compositional bias: basic residues. The stretch at 108-404 (NPIRRACISL…LVLGVLSGEF (297 aa)) is one I repeat. A helical transmembrane segment spans residues 122–140 (PFDIFILLSIFANCVALAV). The Extracellular segment spans residues 141–158 (YIPFPEDDSNSTNHNLEK). N-linked (GlcNAc...) asparagine glycosylation occurs at Asn150. A helical transmembrane segment spans residues 159–178 (VEYAFLIIFTVETFLKIIAY). The Cytoplasmic portion of the chain corresponds to 179 to 190 (GLLLHPNAYVRN). A helical membrane pass occupies residues 191–209 (GWNLLDFVIVVVGLFSVIL). At 210–230 (EQLTKETEGGSHSGGKPGGFD) the chain is on the extracellular side. The helical transmembrane segment at 231 to 249 (VKALRAFRVLRPLRLVSGV) threads the bilayer. Residues 250-268 (PSLQVVLNSIIKAMVPLLH) lie on the Cytoplasmic side of the membrane. A helical transmembrane segment spans residues 269 to 288 (IALLVLFVIIIYAIIGLELF). The Extracellular segment spans residues 289-376 (IGKMHKSCFL…WVNDAIGCEW (88 aa)). A glycan (N-linked (GlcNAc...) asparagine) is linked at Asn324. Position 359 (Glu359) interacts with Ca(2+). A helical transmembrane segment spans residues 377 to 401 (PWIYFVSLIILGSFFVLNLVLGVLS). Over 402–544 (GEFSKEREKA…RKCRAAVKSV (143 aa)) the chain is Cytoplasmic. The binding to the beta subunit stretch occupies residues 424–441 (QQLEEDLKGYLDWITQAE). The tract at residues 478 to 500 (GRSSNKHASMPTSETESVNTENV) is disordered. One copy of the II repeat lies at 530-776 (NRFNRRKCRA…VFLAIAVDNL (247 aa)). Residues 545–564 (TFYWLVIVLVFLNTLTISSE) form a helical membrane-spanning segment. The Extracellular portion of the chain corresponds to 565 to 579 (HYNQPDWLTQIQDIA). A helical transmembrane segment spans residues 580 to 598 (NKVLLALFTCEMLVKMYSL). Residues 599–606 (GLQAYFVS) lie on the Cytoplasmic side of the membrane. The helical transmembrane segment at 607–625 (LFNRFDCFVVCGGIVETIL) threads the bilayer. Residues 626–635 (VELEIMSPLG) lie on the Extracellular side of the membrane. A helical membrane pass occupies residues 636-654 (ISVFRCVRLLRIFKVTRHW). Over 655 to 673 (ASLSNLVASLLNSMKSIAS) the chain is Cytoplasmic. The helical transmembrane segment at 674-694 (LLLLLFLFIIIFSLLGMQLFG) threads the bilayer. At 695 to 748 (GKFNFDETQTKRSTFDNFPQALLTVFQILTGEDWNAVMYDGIMAYGGPSSSGMI) the chain is on the extracellular side. Ca(2+) is bound at residue Glu726. A helical membrane pass occupies residues 749–773 (VCIYFIILFICGNYILLNVFLAIAV). The Cytoplasmic segment spans residues 774–907 (DNLADAESLN…VGCHRLINHH (134 aa)). A compositionally biased stretch (basic and acidic residues) spans 787 to 823 (KEEAEEKERKKNARKESLENKKSEKSEGDQKKPKDSK). Positions 787–869 (KEEAEEKERK…VPAGPRPRRI (83 aa)) are disordered. A compositionally biased stretch (acidic residues) spans 847–859 (VGEDEEDEEDEPE). One copy of the III repeat lies at 894 to 1176 (NPIRVGCHRL…IFVGFVIVTF (283 aa)). The chain crosses the membrane as a helical span at residues 908 to 926 (IFTNLILVFIMLSSVSLAA). Over 927-942 (EDPIRSHSFRNNILGY) the chain is Extracellular. Residues 943-962 (ADYVFTSMFTFEIILKMTAF) form a helical membrane-spanning segment. Over 963–974 (GAFLHKGSFCRN) the chain is Cytoplasmic. Residues 975–993 (YFNLLDLLVVGVSLVSFGI) traverse the membrane as a helical segment. The Extracellular segment spans residues 994–999 (QSSAIS). Residues 1000-1019 (VVKILRVLRVLRPLRAINRA) form a helical membrane-spanning segment. Topologically, residues 1020-1038 (KGLKHVVQCVFVAIRTIGN) are cytoplasmic. The chain crosses the membrane as a helical span at residues 1039 to 1058 (IMIVTTLLQFMFACIGVQLF). Residues 1059–1148 (KGKFYKCTDE…VGPVYNYRVE (90 aa)) are Extracellular-facing. Residues 1096–1186 (RVWQNSDFNF…QEQGEQEYKN (91 aa)) are dihydropyridine binding. Glu1122 is a binding site for Ca(2+). A helical membrane pass occupies residues 1149 to 1169 (ISIFFIIYIIIIAFFMMNIFV). The Cytoplasmic segment spans residues 1170–1226 (GFVIVTFQEQGEQEYKNCELDKNQRQCVEYALKARPLRRYIPKNPYQYKFWYVVNST). One copy of the IV repeat lies at 1213–1496 (NPYQYKFWYV…LFVAVIMDNF (284 aa)). The chain crosses the membrane as a helical span at residues 1227–1245 (GFEYIMFVLIMLNTLCLAM). At 1246-1260 (QHYGQSKLFNDAMDI) the chain is on the extracellular side. Residues 1261–1280 (MNMVFTGVFTVEMVLKLIAF) traverse the membrane as a helical segment. Residues 1281 to 1297 (KPKIFVRKKERWLGYFS) lie on the Cytoplasmic side of the membrane. Residues 1298–1319 (DAWNTFDSLIVIGSIVDVVLSE) traverse the membrane as a helical segment. The Extracellular segment spans residues 1320 to 1342 (ADPKPTETVTTDESGNSEDSARI). The helical transmembrane segment at 1343–1362 (SITFFRLFRVMRLVKLLSRG) threads the bilayer. Topologically, residues 1363–1381 (EGIRTLLWTFIKSFQALPY) are cytoplasmic. A helical membrane pass occupies residues 1382–1401 (VALLIAMLFFIYAVIGMQVF). Over 1402–1468 (GKVAMRDNNQ…GEEYTCGSNF (67 aa)) the chain is Extracellular. The dihydropyridine binding stretch occupies residues 1449–1515 (RCDPESDYNP…LGPHHLDEFK (67 aa)). The segment at 1461–1504 (EYTCGSNFAIIYFISFYMLCAFLIINLFVAVIMDNFDYLTRDWS) is phenylalkylamine binding. Residues 1469 to 1493 (AIIYFISFYMLCAFLIINLFVAVIM) form a helical membrane-spanning segment. At 1494 to 2190 (DNFDYLTRDW…ADEMICITSL (697 aa)) the chain is on the cytoplasmic side. Disordered regions lie at residues 1736-1787 (THRP…NANL), 1803-1833 (FGSHEHRSENGYHSYSRADHEKRRRPSSRRT), 1917-1952 (HGFFEEDDSQTCYDTKRSPRRRLLPPTPASNRRSSF), and 1995-2025 (SSKAHKHSPSRSTRSWATPPATPPNRDHTPY). The span at 1805–1823 (SHEHRSENGYHSYSRADHE) shows a compositional bias: basic and acidic residues. Positions 1824–1833 (KRRRPSSRRT) are enriched in basic residues.

It belongs to the calcium channel alpha-1 subunit (TC 1.A.1.11) family. CACNA1D subfamily. In terms of assembly, voltage-dependent calcium channels are multisubunit complexes, consisting of alpha-1, alpha-2, beta and delta subunits in a 1:1:1:1 ratio. The channel activity is directed by the pore-forming and voltage-sensitive alpha-1 subunit. In many cases, this subunit is sufficient to generate voltage-sensitive calcium channel activity. The auxiliary subunits beta and alpha-2/delta linked by a disulfide bridge regulate the channel activity. Interacts with RIMBP2. Expressed in the basilar papilla of the cochlea.

The protein resides in the membrane. The catalysed reaction is Ca(2+)(in) = Ca(2+)(out). Its function is as follows. The isoform alpha-1D gives rise to L-type calcium currents. Long-lasting (L-type) calcium channels belong to the 'high-voltage activated' (HVA) group. This is Voltage-dependent L-type calcium channel subunit alpha-1D (CACNA1D) from Gallus gallus (Chicken).